Consider the following 853-residue polypeptide: MKEPRIRGGLPLVWLWVLLAVAPGESLAKETAFVEVVLFESSPNGDYKTHTTELQGRFSRAGATISAEGEIVQMHPLGLCNNNDEEDLYEYGWVGVVKLEQPEMDPKPCLTVLGKAKRAVQRGATAVIFDVSDNPDAVEQLNQGLEDPLKRPVVYMKGMDAIKLMNIVNKQKGARARIQHRPPRQPTEYFDMGIFLAFFVVVSLVCLILLIKIKLKQRRSQNSMNRMAVQALEKMETRKFKAKGKVPREGSCGGLDTLSSSSTSDCAICLEKYIDGEELRVIPCTHRFHKRCVDPWLLQNHTCPHCRHNIIEQKKGGHGPVCVENSSNRGRQQQQQRVILPVHYPGRVQRTGPIAAYPTRTSMGPHGNPITVLTVERPLEPDLYPARTPTFLAGYRPVSLDHASSGHHCDLEHPPYPAPPAGHGFRRAKYSGRGFNNGTCYSQYETMYQHYYFQGLSYPHQQEVGGSQAPRVVENGHNHSFHSGNNMLYQPAPTLMHMAPPSSVGSCYLHSQHQHRSVCSGYLADVPCSDSSSSSSASSAQGHASSSDSMLDCTEASNQGVYGSCSTFRSSLSSDFDPYVYRSRSPARTGGGDAPGCGGEGGTGSGRGRVECRSHQTFPNSPSRDRLSSCSMEMNYSSNSSLERRGAVISSGTVPDASVSISQGGGKDRRGPEKGCTCCFQRQAGDPSSDCTNLYLGPDPHQTSGPSSSGGLYSVTSSILHRTDPGTVLGHPSRPCCLYEENHGSCYNEDYAVSIQYALAEAAAAAAAAAVAGCEAGQPIPIIPEDPGYDGGLECVGHVSWEMEGEEEEEEVLYCQEGPCCALAEETRALCRSTGKEGAGSTTGQDCHPTDRD.

An N-terminal signal peptide occupies residues 1–28; sequence MKEPRIRGGLPLVWLWVLLAVAPGESLA. At 29–192 the chain is on the extracellular side; sequence KETAFVEVVL…PRQPTEYFDM (164 aa). A helical transmembrane segment spans residues 193–213; it reads GIFLAFFVVVSLVCLILLIKI. Residues 214–853 are Cytoplasmic-facing; sequence KLKQRRSQNS…GQDCHPTDRD (640 aa). An RING-type; atypical zinc finger spans residues 266–307; the sequence is CAICLEKYIDGEELRVIPCTHRFHKRCVDPWLLQNHTCPHCR. Disordered stretches follow at residues 583–629, 650–673, 685–713, and 834–853; these read SRSP…RLSS, SSGT…RGPE, GDPS…GGLY, and TGKE…TDRD. The segment covering 589-607 has biased composition (gly residues); it reads TGGGDAPGCGGEGGTGSGR. The segment covering 615-629 has biased composition (polar residues); that stretch reads HQTFPNSPSRDRLSS.

This sequence belongs to the ZNRF3 family.

It localises to the cell membrane. It carries out the reaction S-ubiquitinyl-[E2 ubiquitin-conjugating enzyme]-L-cysteine + [acceptor protein]-L-lysine = [E2 ubiquitin-conjugating enzyme]-L-cysteine + N(6)-ubiquitinyl-[acceptor protein]-L-lysine.. The protein operates within protein modification; protein ubiquitination. E3 ubiquitin-protein ligase that acts as a negative regulator of the Wnt signaling pathway by mediating the ubiquitination and subsequent degradation of Wnt receptor complex components. Along with RSPO2 and RNF43, constitutes a master switch that governs limb specification. The chain is E3 ubiquitin-protein ligase ZNRF3 (znrf3) from Xenopus tropicalis (Western clawed frog).